Here is a 136-residue protein sequence, read N- to C-terminus: Small ribosomal subunit protein uS8c (136 aa).

This sequence belongs to the universal ribosomal protein uS8 family. In terms of assembly, part of the 30S ribosomal subunit.

The protein localises to the plastid. It localises to the chloroplast. Its function is as follows. One of the primary rRNA binding proteins, it binds directly to 16S rRNA central domain where it helps coordinate assembly of the platform of the 30S subunit. This chain is Small ribosomal subunit protein uS8c (rps8), found in Morus indica (Mulberry).